We begin with the raw amino-acid sequence, 208 residues long: Uracil phosphoribosyltransferase (208 aa).

5-phospho-alpha-D-ribose 1-diphosphate contacts are provided by residues Arg-78, Arg-103, and 130–138 (DPMLATGGT). Uracil is bound by residues Ile-193 and 198-200 (GDA). Asp-199 serves as a coordination point for 5-phospho-alpha-D-ribose 1-diphosphate.

The protein belongs to the UPRTase family. Mg(2+) is required as a cofactor.

It carries out the reaction UMP + diphosphate = 5-phospho-alpha-D-ribose 1-diphosphate + uracil. Its pathway is pyrimidine metabolism; UMP biosynthesis via salvage pathway; UMP from uracil: step 1/1. Its activity is regulated as follows. Allosterically activated by GTP. In terms of biological role, catalyzes the conversion of uracil and 5-phospho-alpha-D-ribose 1-diphosphate (PRPP) to UMP and diphosphate. The polypeptide is Uracil phosphoribosyltransferase (Nitratidesulfovibrio vulgaris (strain ATCC 29579 / DSM 644 / CCUG 34227 / NCIMB 8303 / VKM B-1760 / Hildenborough) (Desulfovibrio vulgaris)).